A 333-amino-acid polypeptide reads, in one-letter code: Altered inheritance of mitochondria protein 23, mitochondrial (333 aa).

The transit peptide at Met-1 to Asn-28 directs the protein to the mitochondrion. Disordered stretches follow at residues Thr-43–Arg-80 and Gln-296–Ala-333. 2 stretches are compositionally biased toward basic and acidic residues: residues Arg-71 to Arg-80 and Pro-297 to Ala-333.

The protein belongs to the AIM23 family.

The protein resides in the mitochondrion. This Komagataella phaffii (strain GS115 / ATCC 20864) (Yeast) protein is Altered inheritance of mitochondria protein 23, mitochondrial (AIM23).